The sequence spans 365 residues: tRNA/tmRNA (uracil-C(5))-methyltransferase (365 aa).

S-adenosyl-L-methionine is bound by residues Gln189, Tyr217, Asn222, Glu238, and Asp298. The Nucleophile role is filled by Cys323. Glu357 serves as the catalytic Proton acceptor.

The protein belongs to the class I-like SAM-binding methyltransferase superfamily. RNA M5U methyltransferase family. TrmA subfamily.

It catalyses the reaction uridine(54) in tRNA + S-adenosyl-L-methionine = 5-methyluridine(54) in tRNA + S-adenosyl-L-homocysteine + H(+). The enzyme catalyses uridine(341) in tmRNA + S-adenosyl-L-methionine = 5-methyluridine(341) in tmRNA + S-adenosyl-L-homocysteine + H(+). In terms of biological role, dual-specificity methyltransferase that catalyzes the formation of 5-methyluridine at position 54 (m5U54) in all tRNAs, and that of position 341 (m5U341) in tmRNA (transfer-mRNA). This Shewanella sp. (strain W3-18-1) protein is tRNA/tmRNA (uracil-C(5))-methyltransferase.